We begin with the raw amino-acid sequence, 314 residues long: MAFLENGNHTAVSEFILLGLTDDPVLRIVLFTIILCIYLVTVSGNLSTILLIRVSSQLHHPMYFFLSHLASADIGLSSSVTPNMLVNFLVERSTISYLGCGIQLSSAALFGATECFLLAAMAYDRFMAICNPLLYSTKMSTKVCVQLIVGSYIAGFLNASSFLLSFFSLLFCGQNIINDFFCDFAPLAELSCSDVSVFVVVISFSAGTVTMLTVFVIAISYSYILITILKMRSTEGRQKAFSTCTSHLTAVTLFYGTVTFIYVMPKSSYSMDQNKIISVFYMVVVPMLNPLIYSLRNNEIKGALKRHFDRKTFS.

Topologically, residues 1–28 (MAFLENGNHTAVSEFILLGLTDDPVLRI) are extracellular. N-linked (GlcNAc...) asparagine glycosylation occurs at Asn-8. Residues 29–49 (VLFTIILCIYLVTVSGNLSTI) traverse the membrane as a helical segment. The Cytoplasmic segment spans residues 50 to 57 (LLIRVSSQ). Residues 58–78 (LHHPMYFFLSHLASADIGLSS) form a helical membrane-spanning segment. Over 79 to 102 (SVTPNMLVNFLVERSTISYLGCGI) the chain is Extracellular. Residues Cys-100 and Cys-192 are joined by a disulfide bond. A helical transmembrane segment spans residues 103-123 (QLSSAALFGATECFLLAAMAY). Residues 124 to 136 (DRFMAICNPLLYS) are Cytoplasmic-facing. Residues 137-157 (TKMSTKVCVQLIVGSYIAGFL) traverse the membrane as a helical segment. Over 158 to 199 (NASSFLLSFFSLLFCGQNIINDFFCDFAPLAELSCSDVSVFV) the chain is Extracellular. The chain crosses the membrane as a helical span at residues 200–220 (VVISFSAGTVTMLTVFVIAIS). Over 221 to 240 (YSYILITILKMRSTEGRQKA) the chain is Cytoplasmic. Residues 241–261 (FSTCTSHLTAVTLFYGTVTFI) form a helical membrane-spanning segment. Residues 262–274 (YVMPKSSYSMDQN) lie on the Extracellular side of the membrane. The chain crosses the membrane as a helical span at residues 275–295 (KIISVFYMVVVPMLNPLIYSL). The Cytoplasmic portion of the chain corresponds to 296 to 314 (RNNEIKGALKRHFDRKTFS).

Belongs to the G-protein coupled receptor 1 family.

The protein localises to the cell membrane. Functionally, potential odorant receptor. This chain is Olfactory receptor 5P66, found in Mus musculus (Mouse).